Reading from the N-terminus, the 357-residue chain is 5-hydroxytryptamine receptor 5A (357 aa).

At 1-36 (MDLPVNLTSFSLSTPSPLETNHSLGKDDLRPSSPLL) the chain is on the extracellular side. N-linked (GlcNAc...) asparagine glycans are attached at residues Asn-6 and Asn-21. Residues 37 to 63 (SVFGVLILTLLGFLVAATFAWNLLVLA) form a helical membrane-spanning segment. Over 64-76 (TILRVRTFHRVPH) the chain is Cytoplasmic. Residues 77–103 (NLVASMAVSDVLVAALVMPLSLVHELS) form a helical membrane-spanning segment. Residues 104–114 (GRRWQLGRRLC) lie on the Extracellular side of the membrane. A disulfide bond links Cys-114 and Cys-192. The helical transmembrane segment at 115–137 (QLWIACDVLCCTASIWNVTAIAL) threads the bilayer. Residue Asp-121 participates in serotonin binding. The Cytoplasmic segment spans residues 138–155 (DRYWSITRHMEYTLRTRK). The chain crosses the membrane as a helical span at residues 156-176 (CVSNVMIALTWALSAVISLAP). Over 177–198 (LLFGWGETYSEGSEECQVSREP) the chain is Extracellular. Residues 199–220 (SYAVFSTVGAFYLPLCVVLFVY) traverse the membrane as a helical segment. The Cytoplasmic portion of the chain corresponds to 221–287 (WKIYKAAKFR…QKEQRAALMV (67 aa)). Residues 288–312 (GILIGVFVLCWIPFFLTELISPLCS) traverse the membrane as a helical segment. The Extracellular segment spans residues 313–314 (CD). A helical membrane pass occupies residues 315 to 339 (IPAIWKSIFLWLGYSNSFFNPLIYT). Topologically, residues 340-357 (AFNKNYNSAFKNFFSRQH) are cytoplasmic.

Belongs to the G-protein coupled receptor 1 family.

Its subcellular location is the cell membrane. Its function is as follows. G-protein coupled receptor for 5-hydroxytryptamine (serotonin), a biogenic hormone that functions as a neurotransmitter, a hormone and a mitogen. Also functions as a receptor for ergot alkaloid derivatives and other psychoactive substances. Ligand binding causes a conformation change that triggers signaling via guanine nucleotide-binding proteins (G proteins) and modulates the activity of downstream effectors. HTR5A is coupled to G(i)/G(o) G alpha proteins and mediates inhibitory neurotransmission: signaling inhibits adenylate cyclase activity and activates a phosphatidylinositol-calcium second messenger system that regulates the release of Ca(2+) ions from intracellular stores. The sequence is that of 5-hydroxytryptamine receptor 5A from Homo sapiens (Human).